The primary structure comprises 317 residues: tRNA dimethylallyltransferase (317 aa).

14–21 contacts ATP; the sequence is GPTAVGKT. 16-21 is a substrate binding site; sequence TAVGKT. The segment at 39-42 is interaction with substrate tRNA; it reads DSMQ.

Belongs to the IPP transferase family. As to quaternary structure, monomer. It depends on Mg(2+) as a cofactor.

The enzyme catalyses adenosine(37) in tRNA + dimethylallyl diphosphate = N(6)-dimethylallyladenosine(37) in tRNA + diphosphate. Catalyzes the transfer of a dimethylallyl group onto the adenine at position 37 in tRNAs that read codons beginning with uridine, leading to the formation of N6-(dimethylallyl)adenosine (i(6)A). In Bacillus cereus (strain AH187), this protein is tRNA dimethylallyltransferase.